A 436-amino-acid polypeptide reads, in one-letter code: mRNA cap guanine-N(7) methyltransferase (436 aa).

A disordered region spans residues 1–50; that stretch reads MSTKPEKPIWMSQEDYDRQYGSITGDESSTVSKKDSKVTANAPGDGNGSL. An mRNA cap 0 methyltransferase domain is found at 141 to 424; that stretch reads SPIIKLRNFN…FYTMFAFRKV (284 aa). MRNA is bound at residue 150–151; that stretch reads NN. Residues Lys-154, Gly-172, Asp-194, Asp-223, Gln-249, and Tyr-254 each contribute to the S-adenosyl-L-methionine site.

The protein belongs to the class I-like SAM-binding methyltransferase superfamily. mRNA cap 0 methyltransferase family.

It localises to the nucleus. It catalyses the reaction a 5'-end (5'-triphosphoguanosine)-ribonucleoside in mRNA + S-adenosyl-L-methionine = a 5'-end (N(7)-methyl 5'-triphosphoguanosine)-ribonucleoside in mRNA + S-adenosyl-L-homocysteine. Functionally, responsible for methylating the 5'-cap structure of mRNAs. This is mRNA cap guanine-N(7) methyltransferase (ABD1) from Saccharomyces cerevisiae (strain ATCC 204508 / S288c) (Baker's yeast).